The chain runs to 351 residues: Small ribosomal subunit biogenesis GTPase RsgA (351 aa).

In terms of domain architecture, CP-type G spans 107 to 277 (ENLLQRPDNF…LIDSPGIREF (171 aa)). GTP is bound by residues 163–166 (NKTD) and 219–227 (GQSGVGKSS). Positions 301, 306, 308, and 314 each coordinate Zn(2+).

Belongs to the TRAFAC class YlqF/YawG GTPase family. RsgA subfamily. As to quaternary structure, monomer. Associates with 30S ribosomal subunit, binds 16S rRNA. The cofactor is Zn(2+).

Its subcellular location is the cytoplasm. Its function is as follows. One of several proteins that assist in the late maturation steps of the functional core of the 30S ribosomal subunit. Helps release RbfA from mature subunits. May play a role in the assembly of ribosomal proteins into the subunit. Circularly permuted GTPase that catalyzes slow GTP hydrolysis, GTPase activity is stimulated by the 30S ribosomal subunit. The polypeptide is Small ribosomal subunit biogenesis GTPase RsgA (Marinobacter nauticus (strain ATCC 700491 / DSM 11845 / VT8) (Marinobacter aquaeolei)).